Reading from the N-terminus, the 329-residue chain is Ferredoxin--NAD(P)(+) reductase CarAd (329 aa).

In terms of domain architecture, 2Fe-2S ferredoxin-type spans 2-92; sequence YQLKIEGQAP…DLRIKVAVQD (91 aa). Residues C35, C40, C43, and C76 each coordinate [2Fe-2S] cluster. Residues 100-200 enclose the FAD-binding FR-type domain; it reads ISRMEAEVVE…TGPMGTSFFR (101 aa).

In terms of assembly, monomer. Carbazole 1,9a-dioxygenase complex consists of a terminal oxygenase component CarAa, a ferredoxin reductase component CarAd and a ferredoxin component CarAc. Requires [2Fe-2S] cluster as cofactor. It depends on FAD as a cofactor.

It carries out the reaction 2 reduced [2Fe-2S]-[ferredoxin] + NAD(+) + H(+) = 2 oxidized [2Fe-2S]-[ferredoxin] + NADH. It catalyses the reaction 2 reduced [2Fe-2S]-[ferredoxin] + NADP(+) + H(+) = 2 oxidized [2Fe-2S]-[ferredoxin] + NADPH. In terms of biological role, part of the multicomponent carbazole 1,9a-dioxygenase (CARDO), that converts carbazole (CAR) into 2-aminobiphenyl-2,3-diol. It can use both NAD and NADP as electron donors, but NAD is supposed to be the physiological electron donor. The polypeptide is Ferredoxin--NAD(P)(+) reductase CarAd (carAd) (Metapseudomonas resinovorans (Pseudomonas resinovorans)).